We begin with the raw amino-acid sequence, 431 residues long: Pyroglutamylated RF-amide peptide receptor (431 aa).

The Extracellular portion of the chain corresponds to 1-46; sequence MQALNITPEQFSRLLRDHNLTREQFIALYRLRPLVYTPELPGRAKL. N19 carries N-linked (GlcNAc...) asparagine glycosylation. Residues 47–67 traverse the membrane as a helical segment; that stretch reads ALVLTGVLIFALALFGNALVF. Residues 68–81 lie on the Cytoplasmic side of the membrane; that stretch reads YVVTRSKAMRTVTN. The chain crosses the membrane as a helical span at residues 82 to 102; that stretch reads IFICSLALSDLLITFFCIPVT. The Extracellular portion of the chain corresponds to 103–120; sequence MLQNISDNWLGGAFICKM. Residues 121–141 traverse the membrane as a helical segment; that stretch reads VPFVQSTAVVTEILTMTCIAV. Topologically, residues 142-162 are cytoplasmic; it reads ERHQGLVHPFKMKWQYTNRRA. The chain crosses the membrane as a helical span at residues 163-183; that stretch reads FTMLGVVWLVAVIVGSPMWHV. The Extracellular portion of the chain corresponds to 184–212; the sequence is QQLEIKYDFLYEKEHICCLEEWTSPVHQK. The helical transmembrane segment at 213–233 threads the bilayer; the sequence is IYTTFILVILFLLPLMVMLIL. Over 234-271 the chain is Cytoplasmic; sequence YSKIGYELWIKKRVGDGSVLRTIHGKEMSKIARKKKRA. The chain crosses the membrane as a helical span at residues 272–292; that stretch reads VIMMVTVVALFAVCWAPFHVV. Over 293–311 the chain is Extracellular; it reads HMMIEYSNFEKEYDDVTIK. The chain crosses the membrane as a helical span at residues 312-332; that stretch reads MIFAIVQIIGFSNSICNPIVY. At 333–431 the chain is on the cytoplasmic side; sequence AFMNENFKKN…AENSPLDSGH (99 aa).

This sequence belongs to the G-protein coupled receptor 1 family. Expressed widely in the brain with high levels in the hypothalamus, trigeminal ganglia and vestibular neurons, and moderate levels in the amygdala, cortex, pituitary, hippocampus, thalamus, caudate nucleus and medulla oblongata. In peripheral tissues, expressed at high levels in the retina and at moderate levels in the heart, kidney, testis and thyroid.

It is found in the cell membrane. Receptor for the orexigenic neuropeptide QRFP. The activity of this receptor is mediated by G proteins that modulate adenylate cyclase activity and intracellular calcium levels. The polypeptide is Pyroglutamylated RF-amide peptide receptor (QRFPR) (Homo sapiens (Human)).